Reading from the N-terminus, the 195-residue chain is uncharacterized protein (195 aa).

The signal sequence occupies residues 1 to 16; that stretch reads MIRTIIVFMLLTISFG.

This is an uncharacterized protein from Acanthamoeba polyphaga mimivirus (APMV).